Consider the following 105-residue polypeptide: Large ribosomal subunit protein bL21 (105 aa).

The protein belongs to the bacterial ribosomal protein bL21 family. As to quaternary structure, part of the 50S ribosomal subunit. Contacts protein L20.

Functionally, this protein binds to 23S rRNA in the presence of protein L20. The protein is Large ribosomal subunit protein bL21 of Dictyoglomus turgidum (strain DSM 6724 / Z-1310).